The following is a 153-amino-acid chain: Transcriptional regulator MraZ (153 aa).

2 consecutive SpoVT-AbrB domains span residues 7–61 (KEKH…LPDV) and 90–133 (LEMV…EPGR).

This sequence belongs to the MraZ family. As to quaternary structure, forms oligomers.

The protein resides in the cytoplasm. The protein localises to the nucleoid. This chain is Transcriptional regulator MraZ, found in Chlorobium luteolum (strain DSM 273 / BCRC 81028 / 2530) (Pelodictyon luteolum).